The chain runs to 401 residues: L-rhamnonate dehydratase (401 aa).

Positions 29 and 55 each coordinate substrate. D222, E248, and E276 together coordinate Mg(2+). Catalysis depends on H325, which acts as the Proton acceptor. Residue E345 participates in substrate binding.

Belongs to the mandelate racemase/muconate lactonizing enzyme family. RhamD subfamily. As to quaternary structure, homooctamer; tetramer of dimers. It depends on Mg(2+) as a cofactor.

The enzyme catalyses L-rhamnonate = 2-dehydro-3-deoxy-L-rhamnonate + H2O. In terms of biological role, catalyzes the dehydration of L-rhamnonate to 2-keto-3-deoxy-L-rhamnonate (KDR). This chain is L-rhamnonate dehydratase, found in Salmonella schwarzengrund (strain CVM19633).